The chain runs to 806 residues: MRYEFSTIEQKWQKYWADNQTFLTDDNPDKPKYYVLDMFPYPSGTGLHVGHLEGYTATDIIARYKRSRGFNVLHPMGWDAFGLPAEQFAIKTGTHPTTTTQKNVSSFRQTLQNMGFSYDWSREINTTDPNYFRWTQWIFLQLLDKGLAYMSEVDVNWCEDLRVVLANEEVDEKIAAGHTVVRKPLRQWVLKITAYAERLLGDLDELDWPENVKQMQRNWIGRSEGVEIDFELPCHRQKLTVYTTRPDTLFGASYLVISPEHPLAEKLATAPQLVELKNYIREAKLKTELERTGLQKEKTGVFTGSYAINPANGEALPVWVSDFVLTSYGTGAIMSVPAHDSRDWEFAKKFGLPIIEVIQSPHDVQDEVFEGKESICVNSSNNEISLDGLDFTSAFKRMADWIESSGKGRRKINYKLRDWIFSRQRYWGEPIPVKHYDDGSLRPETDLPLTLPEVEAYHPSTTGESPLANIEDWLFGQDEHGAFRRETNTMPQWAGSCWYYLRFIDPSNQQQLVDPDKERYWMNVDLYIGGAEHAVLHLLYARFWHKVLYDLGVVSTKEPFQKLFNQGMILGEDNEKMSKSRGNVIPADHVMQSYGADAVRLYEMFLGPLEQVKPWNTNGIEGISRFLSRVWRIVYPEQEGPAMLTDTPLDDALTRRMHKTIKKVTEDTEHLKFNTAIAEMMVFVNELHKAGCRNRKALETLLLLLAPYAPHICEELWQAAGNNEPIARAPFPVFDPALAEDNELTIAVQVNGKLRGTFLAPAGLSKEAMIAGAREIESVKKFLEGMTIIKEIAVPGKLVNFAVKPL.

Residues 40–51 (PYPSGTGLHVGH) carry the 'HIGH' region motif. The 'KMSKS' region signature appears at 576–580 (KMSKS). Lys579 serves as a coordination point for ATP.

This sequence belongs to the class-I aminoacyl-tRNA synthetase family.

Its subcellular location is the cytoplasm. The catalysed reaction is tRNA(Leu) + L-leucine + ATP = L-leucyl-tRNA(Leu) + AMP + diphosphate. The chain is Leucine--tRNA ligase from Prosthecochloris aestuarii (strain DSM 271 / SK 413).